A 189-amino-acid polypeptide reads, in one-letter code: Probable transcriptional regulator Rv1176c (189 aa).

This sequence belongs to the PadR family. In terms of assembly, homodimer.

The protein resides in the cytoplasm. Probable transcriptional regulator that may help mitigate the effect of oxidative stress and help mycobacteria survive inside macrophages. Binds to its own promoter region. The sequence is that of Probable transcriptional regulator Rv1176c from Mycobacterium tuberculosis (strain ATCC 25618 / H37Rv).